The following is a 546-amino-acid chain: Calcitonin receptor-like protein 1 (546 aa).

Residues 1–171 (MADATSPFNV…EVARNARKLE (171 aa)) lie on the Cytoplasmic side of the membrane. A helical membrane pass occupies residues 172–192 (FVGLGLSLVSLILAISIFSYF). The Extracellular portion of the chain corresponds to 193 to 205 (RRLRVFRNLLHLH). A helical transmembrane segment spans residues 206–226 (LMIAMLMVVILRLVLYIDLIF). Over 227-251 (TGENGPHTNSAEGKTINTMPIVCEG) the chain is Cytoplasmic. Residues 252–272 (MFFFLEYFKTVTFCWMFLEGI) form a helical membrane-spanning segment. Over 273-292 (YLNNQIVFGFFNSEPKLLPY) the chain is Extracellular. Residues 293-313 (FIAGYGIPLVHTMLWLLVVLI) traverse the membrane as a helical segment. Topologically, residues 314–333 (KKDFKVERCLGSYYLEPEFW) are cytoplasmic. A helical transmembrane segment spans residues 334-354 (ILDGPRMAELVINLFFICNVI). Residues 355–377 (RVLYSKVRESNNTSEAGLKKSVK) lie on the Extracellular side of the membrane. N-linked (GlcNAc...) asparagine glycosylation is found at asparagine 365 and asparagine 366. A helical transmembrane segment spans residues 378 to 398 (AAMMLLPLLGVPNIMQTIPFA). Topologically, residues 399–403 (PTRDN) are cytoplasmic. The chain crosses the membrane as a helical span at residues 404-424 (IMVFAVWTYTASFTYMYQGLM). Residues 425 to 546 (VASIYCFTNK…EGSNRSTKSP (122 aa)) are Extracellular-facing. Asparagine 472 and asparagine 476 each carry an N-linked (GlcNAc...) asparagine glycan. The tract at residues 472 to 546 (NGTANASAPQ…EGSNRSTKSP (75 aa)) is disordered. Positions 473–485 (GTANASAPQTNNA) are enriched in polar residues. Residues 500 to 520 (KGSDDSTTKLMKDAVMEEEKN) show a composition bias toward basic and acidic residues. N-linked (GlcNAc...) asparagine glycosylation occurs at asparagine 540.

This sequence belongs to the G-protein coupled receptor 2 family. Expression was observed in the mechanosensory neuron pairs PLM, ALM, FLP, OLQD, and OLQV, the chemosensory neurons PHA, PHB, RMEV, the ring motor neurons RMED, and the pharyngeal interneuron pair I1. Expression in sensory neurons PHA, PQR and URY are responsible for mate searching behavior. Expressed in AIY, RIM, RIA, and other neurons.

The protein localises to the cell membrane. Its function is as follows. G-protein coupled receptor for PDF neuropeptides. Plays a role in responses to environmental signals, including chemicals and touch, and in modulating locomotory behaviors. Capable of transducing signals via an adenylate cyclase acy-1 cAMP-dependent pathway. Required to regulate the sex-specific expression of TGFbeta-like daf-7 in the ASJ chemosensory neurons, perhaps acting via acy-1. Involved in modulating mate searching behavior independent of nutritional status. In the presence of food, plays a role in initiating and extending exploratory roaming behavior, perhaps acting in AIY, RIM, RIA, and other neurons, in opposition to 5-hydroxytryptamine (serotonin) signaling. Involved in mediating arousal from the sleep-like state called lethargus, which occurs during molting between larval and adult stages, in part by regulating touch sensitivity. May play a role in circadian rhythms of locomotor activity. G-protein coupled receptor which is activated by neuropeptides PDF-1 and PDF-2. Probably acts through the G-alpha(s) type of G proteins to elevate cAMP levels. Functionally, G-protein coupled receptor which is activated by neuropeptides PDF-1 and PDF-2; however, activation is lower compared to isoforms a and b. Probably inhibits cAMP levels through the G-alpha(i/o) type of G proteins. This is Calcitonin receptor-like protein 1 (pdfr-1) from Caenorhabditis elegans.